Reading from the N-terminus, the 229-residue chain is Protein-lysine N-methyltransferase EFM4 (229 aa).

It belongs to the class I-like SAM-binding methyltransferase superfamily. EFM4 family.

It localises to the cytoplasm. It catalyses the reaction L-lysyl-[protein] + S-adenosyl-L-methionine = N(6)-methyl-L-lysyl-[protein] + S-adenosyl-L-homocysteine + H(+). The catalysed reaction is N(6)-methyl-L-lysyl-[protein] + S-adenosyl-L-methionine = N(6),N(6)-dimethyl-L-lysyl-[protein] + S-adenosyl-L-homocysteine + H(+). Its function is as follows. S-adenosyl-L-methionine-dependent protein-lysine N-methyltransferase that mono- and dimethylates elongation factor 1-alpha (TEF1 and TEF2) at 'Lys-316'. May play a role in intracellular transport. This chain is Protein-lysine N-methyltransferase EFM4, found in Saccharomyces cerevisiae (strain ATCC 204508 / S288c) (Baker's yeast).